A 474-amino-acid chain; its full sequence is MGASMEKQTVVTRFAPSPTGFLHIGGARTALFNWLFARHHGGKFLLRIEDTDRARSTQEAIDAILDGMRWLDLGWDGEVVYQFARAERHAEVARELLANGHAYRCYATPEELAELREQQRAAKQPLRYDGRWRDRDPSEAPAGAPFVIRLKAPRTGEVTIDDQVQGPVTVQNAELDDMILLRSDGTPTYMLAVVVDDHDMGVTHVIRGDDHLNNAFRQLALIRAMGWEEPVYAHIPLIHGADGAKLSKRHGALGVDAYRDELGLLSEAVNNYLLRLGWGHGDDEIISREQAVEWFDLAGVGRSPSRFDFKKLENLNGHYMREADDARLADLIAPGVAARAGREFDSADHDLLLRSIPFLKVRAKDINELAEGASFLFRTRPLDMDEKAASLLDDPGKALLAQAREALAATDDWSALALEAGVRSVAERGGIGLGKVAQPLRAALTGRTTSPGIFDVLALLGREESLGRLDDQLG.

The 'HIGH' region signature appears at 16–26 (PSPTGFLHIGG). Positions 245 to 249 (KLSKR) match the 'KMSKS' region motif. ATP is bound at residue K248.

Belongs to the class-I aminoacyl-tRNA synthetase family. Glutamate--tRNA ligase type 1 subfamily. Monomer.

It is found in the cytoplasm. The enzyme catalyses tRNA(Glu) + L-glutamate + ATP = L-glutamyl-tRNA(Glu) + AMP + diphosphate. In terms of biological role, catalyzes the attachment of glutamate to tRNA(Glu) in a two-step reaction: glutamate is first activated by ATP to form Glu-AMP and then transferred to the acceptor end of tRNA(Glu). The chain is Glutamate--tRNA ligase 2 from Rhizorhabdus wittichii (strain DSM 6014 / CCUG 31198 / JCM 15750 / NBRC 105917 / EY 4224 / RW1) (Sphingomonas wittichii).